The primary structure comprises 242 residues: Biosynthetic peptidoglycan transglycosylase (242 aa).

The helical transmembrane segment at 19 to 39 threads the bilayer; it reads ILAALAVFWGGGIALFSVVPV.

The protein belongs to the glycosyltransferase 51 family.

The protein resides in the cell inner membrane. It catalyses the reaction [GlcNAc-(1-&gt;4)-Mur2Ac(oyl-L-Ala-gamma-D-Glu-L-Lys-D-Ala-D-Ala)](n)-di-trans,octa-cis-undecaprenyl diphosphate + beta-D-GlcNAc-(1-&gt;4)-Mur2Ac(oyl-L-Ala-gamma-D-Glu-L-Lys-D-Ala-D-Ala)-di-trans,octa-cis-undecaprenyl diphosphate = [GlcNAc-(1-&gt;4)-Mur2Ac(oyl-L-Ala-gamma-D-Glu-L-Lys-D-Ala-D-Ala)](n+1)-di-trans,octa-cis-undecaprenyl diphosphate + di-trans,octa-cis-undecaprenyl diphosphate + H(+). The protein operates within cell wall biogenesis; peptidoglycan biosynthesis. In terms of biological role, peptidoglycan polymerase that catalyzes glycan chain elongation from lipid-linked precursors. This chain is Biosynthetic peptidoglycan transglycosylase, found in Salmonella heidelberg (strain SL476).